We begin with the raw amino-acid sequence, 227 residues long: LexA repressor (227 aa).

The segment at residues 26–46 is a DNA-binding region (H-T-H motif); that stretch reads FDEMKEALDLASKSGIHRLIT. Active-site for autocatalytic cleavage activity residues include Ser147 and Lys185.

It belongs to the peptidase S24 family. As to quaternary structure, homodimer.

The enzyme catalyses Hydrolysis of Ala-|-Gly bond in repressor LexA.. Functionally, represses a number of genes involved in the response to DNA damage (SOS response), including recA and lexA. In the presence of single-stranded DNA, RecA interacts with LexA causing an autocatalytic cleavage which disrupts the DNA-binding part of LexA, leading to derepression of the SOS regulon and eventually DNA repair. This chain is LexA repressor, found in Hyphomonas neptunium (strain ATCC 15444).